We begin with the raw amino-acid sequence, 121 residues long: Large ribosomal subunit protein bL12 (121 aa).

It belongs to the bacterial ribosomal protein bL12 family. In terms of assembly, homodimer. Part of the ribosomal stalk of the 50S ribosomal subunit. Forms a multimeric L10(L12)X complex, where L10 forms an elongated spine to which 2 to 4 L12 dimers bind in a sequential fashion. Binds GTP-bound translation factors.

In terms of biological role, forms part of the ribosomal stalk which helps the ribosome interact with GTP-bound translation factors. Is thus essential for accurate translation. The chain is Large ribosomal subunit protein bL12 from Pseudomonas savastanoi pv. phaseolicola (strain 1448A / Race 6) (Pseudomonas syringae pv. phaseolicola (strain 1448A / Race 6)).